Consider the following 76-residue polypeptide: Acyl carrier protein (76 aa).

The 76-residue stretch at 1–76 (MSVEEKVKKI…DAIDYIAGKQ (76 aa)) folds into the Carrier domain. S36 bears the O-(pantetheine 4'-phosphoryl)serine mark.

This sequence belongs to the acyl carrier protein (ACP) family. 4'-phosphopantetheine is transferred from CoA to a specific serine of apo-ACP by AcpS. This modification is essential for activity because fatty acids are bound in thioester linkage to the sulfhydryl of the prosthetic group.

The protein resides in the cytoplasm. Its pathway is lipid metabolism; fatty acid biosynthesis. In terms of biological role, carrier of the growing fatty acid chain in fatty acid biosynthesis. The protein is Acyl carrier protein of Oleidesulfovibrio alaskensis (strain ATCC BAA-1058 / DSM 17464 / G20) (Desulfovibrio alaskensis).